Consider the following 279-residue polypeptide: Polyamine aminopropyltransferase (279 aa).

One can recognise a PABS domain in the interval 4–237 (IEWYPRGYGV…SPWAFLVGIK (234 aa)). Gln29 is a binding site for S-methyl-5'-thioadenosine. The spermidine site is built by His60 and Asp84. Residues Glu104 and 141–142 (DG) each bind S-methyl-5'-thioadenosine. Residue Asp158 is the Proton acceptor of the active site. 158–161 (DSTD) serves as a coordination point for spermidine. Pro165 is a binding site for S-methyl-5'-thioadenosine.

The protein belongs to the spermidine/spermine synthase family. As to quaternary structure, homodimer or homotetramer.

The protein resides in the cytoplasm. It carries out the reaction S-adenosyl 3-(methylsulfanyl)propylamine + putrescine = S-methyl-5'-thioadenosine + spermidine + H(+). Its pathway is amine and polyamine biosynthesis; spermidine biosynthesis; spermidine from putrescine: step 1/1. Its function is as follows. Catalyzes the irreversible transfer of a propylamine group from the amino donor S-adenosylmethioninamine (decarboxy-AdoMet) to putrescine (1,4-diaminobutane) to yield spermidine. This chain is Polyamine aminopropyltransferase, found in Pyrococcus abyssi (strain GE5 / Orsay).